Reading from the N-terminus, the 1505-residue chain is Myosin-6 (1505 aa).

Residues 8-57 (SVGSFVWVEDPDEAWIDGEVVQVNGDEIKVLCTSGKHVVTKISNAYPKDV) enclose the Myosin N-terminal SH3-like domain. The Myosin motor domain maps to 62–731 (SGVDDMTRLA…QMADLDTRRT (670 aa)). ATP contacts are provided by residues 156–163 (GESGAGKT) and 209–217 (NNNSSRFGK). 4 actin-binding regions span residues 495–529 (LIEKKPGGIIALLDEACMFPRSTHETFAQKLYQTF), 531–554 (THKRFTKPKLARSDFTICHYAGDV), 589–612 (FPPMSDDSKQSKFSSIGTRFKQQL), and 612–634 (LVSLLEILNTTEPHYIRCIKPNN). 6 consecutive IQ domains span residues 734–763 (LGRSASIIQRKVRSYLAKKSFIVLRNSAKQ), 757–786 (LRNSAKQIQSVCRGYLARSVYEGMRREAAA), 782–811 (REAAALKIQRDLRRFLARKAYTELYSAAVS), 805–834 (LYSAAVSVQAGMRGMVARKELCFRRQTKAA), 830–859 (QTKAAIIIQTWCRGYLARLHYRKLKKAAIT), and 853–882 (LKKAAITTQCAWRSKVARGELRKLKMAARE). Residues 883–1048 (TGALQAAKNK…AEKKIMHQQT (166 aa)) adopt a coiled-coil conformation. One can recognise a Dilute domain in the interval 1148 to 1452 (DRLIQMIGSA…ISSMRTLMTE (305 aa)).

This sequence belongs to the TRAFAC class myosin-kinesin ATPase superfamily. Myosin family. Plant myosin class XI subfamily. Homodimer. Interacts with RABC2A and RABD1. In terms of tissue distribution, expressed in flowers, leaves, roots and stems.

The protein resides in the cytoplasm. In terms of biological role, myosin heavy chain that is required for the cell cycle-regulated transport of various organelles and proteins for their segregation. Functions by binding with its tail domain to receptor proteins on organelles and exerting force with its N-terminal motor domain against actin filaments, thereby transporting its cargo along polarized actin cables. Involved in the tip growth of root hair cells. Plays a major role in trafficking of Golgi stacks, mitochondria and peroxisomes during root hair development. Targets the peroxisome through an interaction with RABC2A. Required for development of pavement cells, trichomes, and stigmatic papillae. The sequence is that of Myosin-6 (XI-2) from Arabidopsis thaliana (Mouse-ear cress).